Here is a 215-residue protein sequence, read N- to C-terminus: Pyridoxine/pyridoxamine 5'-phosphate oxidase (215 aa).

Substrate is bound by residues 8–11 (RQEY) and lysine 66. FMN is bound by residues 61–66 (RIVLLK), 76–77 (YT), arginine 82, lysine 83, and glutamine 105. Residues tyrosine 123 and arginine 127 each contribute to the substrate site. FMN contacts are provided by residues 140-141 (QS) and tryptophan 186. 192–194 (RLH) provides a ligand contact to substrate. Position 196 (arginine 196) interacts with FMN.

It belongs to the pyridoxamine 5'-phosphate oxidase family. As to quaternary structure, homodimer. FMN serves as cofactor.

It catalyses the reaction pyridoxamine 5'-phosphate + O2 + H2O = pyridoxal 5'-phosphate + H2O2 + NH4(+). It carries out the reaction pyridoxine 5'-phosphate + O2 = pyridoxal 5'-phosphate + H2O2. It functions in the pathway cofactor metabolism; pyridoxal 5'-phosphate salvage; pyridoxal 5'-phosphate from pyridoxamine 5'-phosphate: step 1/1. Its pathway is cofactor metabolism; pyridoxal 5'-phosphate salvage; pyridoxal 5'-phosphate from pyridoxine 5'-phosphate: step 1/1. In terms of biological role, catalyzes the oxidation of either pyridoxine 5'-phosphate (PNP) or pyridoxamine 5'-phosphate (PMP) into pyridoxal 5'-phosphate (PLP). This is Pyridoxine/pyridoxamine 5'-phosphate oxidase from Salinibacter ruber (strain DSM 13855 / M31).